A 213-amino-acid polypeptide reads, in one-letter code: MTDQSHQCVIIGIAGASASGKSLIASTLYRELREQVGDEHIGVIPEDCYYKDQSHLSMEERVKTNYDHPSAMDHSLLLEHLQALKRGSAIDLPVYSYVEHTRMKETVTVEPKKVIILEGILLLTDARLRDELNFSIFVDTPLDICLMRRIKRDVNERGRSMDSVMAQYQKTVRPMFLQFIEPSKQYADIIVPRGGKNRIAIDILKAKISQFFE.

G15–S22 provides a ligand contact to ATP.

It belongs to the uridine kinase family.

The protein resides in the cytoplasm. It catalyses the reaction uridine + ATP = UMP + ADP + H(+). The catalysed reaction is cytidine + ATP = CMP + ADP + H(+). It participates in pyrimidine metabolism; CTP biosynthesis via salvage pathway; CTP from cytidine: step 1/3. The protein operates within pyrimidine metabolism; UMP biosynthesis via salvage pathway; UMP from uridine: step 1/1. This is Uridine kinase from Escherichia coli O157:H7.